The primary structure comprises 357 residues: 3-isopropylmalate dehydrogenase (357 aa).

76-89 (GPQWDTIDPALRPE) is a binding site for NAD(+). Positions 96, 106, 134, and 224 each coordinate substrate. Mg(2+)-binding residues include Asp224, Asp248, and Asp252. 282-294 (GSAPDIAGQGIAN) contacts NAD(+).

It belongs to the isocitrate and isopropylmalate dehydrogenases family. LeuB type 1 subfamily. As to quaternary structure, homodimer. The cofactor is Mg(2+). It depends on Mn(2+) as a cofactor.

The protein resides in the cytoplasm. The catalysed reaction is (2R,3S)-3-isopropylmalate + NAD(+) = 4-methyl-2-oxopentanoate + CO2 + NADH. Its pathway is amino-acid biosynthesis; L-leucine biosynthesis; L-leucine from 3-methyl-2-oxobutanoate: step 3/4. Catalyzes the oxidation of 3-carboxy-2-hydroxy-4-methylpentanoate (3-isopropylmalate) to 3-carboxy-4-methyl-2-oxopentanoate. The product decarboxylates to 4-methyl-2 oxopentanoate. This Xanthomonas campestris pv. campestris (strain 8004) protein is 3-isopropylmalate dehydrogenase.